A 457-amino-acid chain; its full sequence is Polygalacturonase-2 (457 aa).

Residues 1–24 form the signal peptide; it reads MVIQRNSILLLIIIFASSISTCRS. A propeptide spanning residues 25–71 is cleaved from the precursor; sequence NVIDDNLFKQVYDNILEQEFAHDFQAYLSYLSKNIESNNNIDKVDKN. Residues Asn189 and Asn240 are each glycosylated (N-linked (GlcNAc...) asparagine). PbH1 repeat units lie at residues 228-255 and 256-277; these read SCTN…HVSN and TQYI…SIVS. Asp270 serves as the catalytic Proton donor. An N-linked (GlcNAc...) asparagine glycan is attached at Asn286. His293 is an active-site residue. PbH1 repeat units lie at residues 309–330 and 338–359; these read VSNV…RIKT and ASNI…IIDQ. N-linked (GlcNAc...) asparagine glycosylation occurs at Asn311. Residues 445 to 457 constitute a propeptide that is removed on maturation; that stretch reads LEISEDEALLYNY.

It belongs to the glycosyl hydrolase 28 family. Monomer PG2 (isoenzymes PG2A and PG2B). Also forms heterodimers called polygalacturonase 1 (PG1) with the beta subunit GP1. In terms of processing, N-glycosylated. PG2B isozyme has a greater degree of glycosylation than PG2A. Expressed only in ripening fruits (at protein level).

It is found in the secreted. It localises to the extracellular space. The protein localises to the apoplast. Its subcellular location is the cell wall. The catalysed reaction is (1,4-alpha-D-galacturonosyl)n+m + H2O = (1,4-alpha-D-galacturonosyl)n + (1,4-alpha-D-galacturonosyl)m.. Its function is as follows. Catalytic subunit of the polygalacturonase isozyme 1 and 2 (PG1 and PG2). Acts in concert with the pectinesterase, in the ripening process. Is involved in cell wall metabolism, specifically in polyuronide degradation. The depolymerization and solubilization of cell wall polyuronides mediated by PG2 during ripening seems to be limited by the beta subunit GP1, probably by recruiting PG2 to form PG1. The chain is Polygalacturonase-2 (PG2) from Solanum lycopersicum (Tomato).